Here is a 108-residue protein sequence, read N- to C-terminus: Ig kappa chain V-V region EPC 109 (108 aa).

The interval 1–23 is framework-1; that stretch reads DVQMIQSPSSLSASLGDIVTMTC. A disulfide bridge links C23 with C88. The tract at residues 24-34 is complementarity-determining-1; the sequence is QASQGTNINLN. Residues 35-49 form a framework-2 region; sequence WFQQKPGKAPKLLIY. The segment at 50–56 is complementarity-determining-2; it reads GASILEA. The tract at residues 57-88 is framework-3; the sequence is GVPSRFSGRRYGTDFTLTISSLEDEDMATYFC. Residues 89 to 97 are complementarity-determining-3; it reads LQHSYLPYT. Positions 98–108 are framework-4; sequence FGGGTKLEKKR.

This Mus musculus (Mouse) protein is Ig kappa chain V-V region EPC 109.